The sequence spans 982 residues: Protein lin-10 (982 aa).

Polar residues predominate over residues 1-16; the sequence is MSSEAVAQATAATTSP. Disordered stretches follow at residues 1–55, 119–228, 269–327, 432–511, and 525–593; these read MSSE…MIPP, QPAL…RTDS, TVAD…STVP, FAQQ…GTDD, and QREQ…SKET. Residues 33 to 44 show a composition bias toward gly residues; it reads KGGGAGGGGGGE. Residues 119 to 134 are compositionally biased toward low complexity; it reads QPALQQPRPSSQASSS. 2 stretches are compositionally biased toward polar residues: residues 143-156 and 169-190; these read RQTAGSVVSSNVSP and ETSGVVQNNDELLVPTSTSSDV. Residues 211–228 show a composition bias toward basic and acidic residues; that stretch reads GEEKSEEKRKLSGDRTDS. The segment covering 301-318 has biased composition (polar residues); sequence SLNQLRSSFNLPDDSTTV. Low complexity-rich tracts occupy residues 432-445 and 454-464; these read FAQQQIAQSAAPTP and PSTSSGPSGAL. Over residues 490 to 501 the composition is skewed to polar residues; sequence NGTSTSTTNGAQ. The segment covering 539–550 has biased composition (low complexity); that stretch reads QEAATAAQEAAE. The segment covering 577–593 has biased composition (basic and acidic residues); sequence GAERRGSVDKKKNSKET. The 185-residue stretch at 604-788 folds into the PID domain; the sequence is GVLFRARYLG…VLNSQELLGD (185 aa). PDZ domains follow at residues 801–886 and 892–968; these read EVVV…TVVS and EVRI…MPTS.

Interacts (via N-terminus) with egl-9 isoform e (via catalytic domain); the interaction regulates its trafficking; the interaction is direct. Interacts with rab-6.2 (in GTP-bound form). In terms of processing, phosphorylated on multiple Ser and Thr residues by cdk-5 which regulates its localization. Post-translationally, may be hydroxylated by egl-9 isoform e on multiple Pro residues which may prevent phosphorylation by cdk-5. As to expression, expressed in vulval epithelial cells and neurons.

It is found in the golgi apparatus. Its subcellular location is the golgi stack membrane. The protein localises to the trans-Golgi network membrane. It localises to the cytoplasm. The protein resides in the synapse. It is found in the perikaryon. Functionally, required specifically for the determination of 3 vulval precursor cell fates P5.p, P6.p and P7.p during late second and early third larval stages; required for basolateral localization of receptor tyrosine kinase let-23. Could have a general but redundant role in development, functioning in diverse cell lineages to control cell fates. Regulates the trafficking of the glr-1 subunit of AMPA-type glutamate receptors (AMPRs) in the ventral nerve cord. This may be partly through interacting with the small GTPase rab-6.2 in its active GTP-bound state. The sequence is that of Protein lin-10 from Caenorhabditis elegans.